A 356-amino-acid polypeptide reads, in one-letter code: sn-glycerol-3-phosphate import ATP-binding protein UgpC (356 aa).

In terms of domain architecture, ABC transporter spans 4-235; it reads LKLQAVTKSW…PASLFVASFI (232 aa). 37 to 44 is an ATP binding site; sequence GPSGCGKS.

Belongs to the ABC transporter superfamily. sn-glycerol-3-phosphate importer (TC 3.A.1.1.3) family. In terms of assembly, the complex is composed of two ATP-binding proteins (UgpC), two transmembrane proteins (UgpA and UgpE) and a solute-binding protein (UgpB).

It localises to the cell inner membrane. It carries out the reaction sn-glycerol 3-phosphate(out) + ATP + H2O = sn-glycerol 3-phosphate(in) + ADP + phosphate + H(+). Part of the ABC transporter complex UgpBAEC involved in sn-glycerol-3-phosphate (G3P) import. Responsible for energy coupling to the transport system. This chain is sn-glycerol-3-phosphate import ATP-binding protein UgpC, found in Escherichia coli O6:H1 (strain CFT073 / ATCC 700928 / UPEC).